The following is a 216-amino-acid chain: Probable nicotinate-nucleotide adenylyltransferase (216 aa).

It belongs to the NadD family.

The catalysed reaction is nicotinate beta-D-ribonucleotide + ATP + H(+) = deamido-NAD(+) + diphosphate. It functions in the pathway cofactor biosynthesis; NAD(+) biosynthesis; deamido-NAD(+) from nicotinate D-ribonucleotide: step 1/1. In terms of biological role, catalyzes the reversible adenylation of nicotinate mononucleotide (NaMN) to nicotinic acid adenine dinucleotide (NaAD). This is Probable nicotinate-nucleotide adenylyltransferase from Shewanella pealeana (strain ATCC 700345 / ANG-SQ1).